A 98-amino-acid chain; its full sequence is MLQKLRKRQRELEEKQYPDELYGFEAEIYEFFMLVAGSLDYVLANKRIPRHQRRSLEKSFFELYPDILPDMIKNDKDLYHHILLYEQVRQEICVALSN.

This is an uncharacterized protein from Bacillus subtilis (strain 168).